Consider the following 401-residue polypeptide: Solute carrier family 22 member 17 (401 aa).

10 consecutive transmembrane segments (helical) span residues 10 to 30, 35 to 55, 69 to 89, 100 to 120, 184 to 203, 218 to 238, 247 to 267, 277 to 297, 309 to 329, and 336 to 356; these read GIVL…AAAG, IMAL…GVYL, VALA…GLAL, MITA…FLES, NIWK…HAIR, FYLC…FLGV, GILL…LGLW, TFSV…TLLA, GLGL…AQRL, and FLQH…IMLL.

It belongs to the major facilitator (TC 2.A.1) superfamily. Organic cation transporter (TC 2.A.1.19) family. In terms of tissue distribution, widely expressed.

The protein localises to the cell membrane. Its subcellular location is the vacuole membrane. Its function is as follows. Cell surface receptor for LCN2 (24p3) that plays a key role in iron homeostasis and transport. Able to bind iron-bound LCN2 (holo-24p3), followed by internalization of holo-24p3 and release of iron, thereby increasing intracellular iron concentration and leading to inhibition of apoptosis. Also binds iron-free LCN2 (apo-24p3), followed by internalization of apo-24p3 and its association with an intracellular siderophore, leading to iron chelation and iron transfer to the extracellular medium, thereby reducing intracellular iron concentration and resulting in apoptosis. This Mus musculus (Mouse) protein is Solute carrier family 22 member 17 (Slc22a17).